We begin with the raw amino-acid sequence, 377 residues long: Cytochrome b (377 aa).

Helical transmembrane passes span 34-54 (FGFLLGMCLSIQIFTGLFLSM), 78-100 (WLLRVLHANGGSMFFICLYIHIA), 113-133 (TWMTGVVLLILVMATAFLGYV), and 179-199 (FFTLHFILPFVVLAMVAIHLL). Histidine 84 and histidine 98 together coordinate heme b. Residues histidine 183 and histidine 197 each contribute to the heme b site. A ubiquinone is bound at residue histidine 202. 4 helical membrane-spanning segments follow: residues 225–245 (FTIKDLFGVVVMVWLLMILVL), 288–308 (KLGGVVALLASVVILIILPLY), 323–343 (MLFWGFISIFILLTWIGAQAI), and 352–372 (QILTSLYFFYFILSPLLSVLW).

It belongs to the cytochrome b family. The main subunits of complex b-c1 are: cytochrome b, cytochrome c1 and the Rieske protein. Heme b is required as a cofactor.

Its subcellular location is the mitochondrion inner membrane. Its function is as follows. Component of the ubiquinol-cytochrome c reductase complex (complex III or cytochrome b-c1 complex) that is part of the mitochondrial respiratory chain. The b-c1 complex mediates electron transfer from ubiquinol to cytochrome c. Contributes to the generation of a proton gradient across the mitochondrial membrane that is then used for ATP synthesis. This Priapulus caudatus (Priapulid worm) protein is Cytochrome b (mt:Cyt-b).